The sequence spans 2438 residues: Highly reducing polyketide synthase ctvA (2438 aa).

The region spanning 4 to 364 (MEPIAIVGTA…GTNAHVILES (361 aa)) is the Ketosynthase family 3 (KS3) domain. Catalysis depends on for beta-ketoacyl synthase activity residues Cys105, His244, and His284. Residues 475-777 (VFTGQGAQWA…LKGPALQTLS (303 aa)) form a malonyl-CoA:ACP transacylase (MAT) domain region. Residue Ser569 is the For malonyltransferase activity of the active site. The segment at 866 to 1001 (HPLLGSLSED…GILTVTWGSP (136 aa)) is N-terminal hotdog fold. A dehydratase (DH) domain region spans residues 866–1153 (HPLLGSLSED…FFEGVHVSSL (288 aa)). Residues 866–1159 (HPLLGSLSED…VSSLVPPSAA (294 aa)) enclose the PKS/mFAS DH domain. The Proton acceptor; for dehydratase activity role is filled by His898. Positions 1018–1159 (ADVTDMEEYY…VSSLVPPSAA (142 aa)) are C-terminal hotdog fold. The active-site Proton donor; for dehydratase activity is the Asp1074. A methyltransferase (CMet) domain region spans residues 1297–1492 (ELLTQFYRDE…TGFGGIDSIT (196 aa)). The tract at residues 2022–2193 (TYLLVGMTGA…ARGLVASVLQ (172 aa)) is ketoreductase (KR) domain. Residues 2318–2396 (EVVEAGVAAK…ELAAAATALL (79 aa)) enclose the Carrier domain. Ser2356 carries the O-(pantetheine 4'-phosphoryl)serine modification. The interval 2402 to 2438 (PGVVGDSDVGSEKDGSSDSRGDTSSSSYQVITPEESD) is disordered. Residues 2411–2422 (GSEKDGSSDSRG) show a composition bias toward basic and acidic residues.

It depends on pantetheine 4'-phosphate as a cofactor.

It functions in the pathway mycotoxin biosynthesis. In terms of biological role, highly reducing polyketide synthase (HR-PKS); part of the gene cluster that mediates the biosynthesis of citreoviridin, an inhibitor of the of F1-ATPase beta-subunit. The HR-PKS ctvA accepts acetyl-CoA as the starter unit and catalyzes eight iterations of malonyl-CoA extension and four iterations of SAM-dependent methylation at C4, C12, C14, and C16. The KR and DH domains selectively act on the first six iterations to generate the hexaene chain. In the last three iterations, the KR and DH domains terminate their functions to yield a beta,delta-diketo ester moiety, which then undergoes intramolecular cyclization to yield an alpha-pyrone intermediate. Subsequently, ctvB methylates the alpha-pyrone hydroxyl group to generate citreomontanin. In order to form the tetrahydrofuran ring with the correct stereochemistry, the terminal alkenes of citreomontanin need to undergo isomerization to yield a (17Z)-hexaene, a step that could be catalyzed by ctvC. The (17Z)-hexaene then undergoes bisepoxidation by ctvC to form a (17R,16R,15S,14R)-bisepoxide moiety. Lastly, ctvD acts as a regioselective hydrolase to form the tetrahydrofuran ring with the substituents in the correct absolute configuration, completing the biosynthesis of citreoviridin. This is Highly reducing polyketide synthase ctvA from Aspergillus terreus (strain NIH 2624 / FGSC A1156).